A 230-amino-acid chain; its full sequence is Ribosome biogenesis protein SLX9 homolog (230 aa).

Over residues M1 to V11 the composition is skewed to basic residues. Disordered stretches follow at residues M1–G42 and L155–Q187. Residues G25–A38 show a composition bias toward pro residues. T34 carries the post-translational modification Phosphothreonine. The span at R166–E177 shows a compositional bias: basic and acidic residues. Phosphoserine is present on S203.

Belongs to the SLX9 family. In terms of tissue distribution, not detected in any tested tissue.

The protein localises to the nucleus. The protein resides in the nucleolus. In terms of biological role, may be involved in ribosome biogenesis. This chain is Ribosome biogenesis protein SLX9 homolog, found in Homo sapiens (Human).